The following is a 161-amino-acid chain: Cyclic pyranopterin monophosphate synthase (161 aa).

Substrate is bound by residues 75-77 (LCH) and 113-114 (ME). D128 is an active-site residue.

This sequence belongs to the MoaC family. As to quaternary structure, homohexamer; trimer of dimers.

It carries out the reaction (8S)-3',8-cyclo-7,8-dihydroguanosine 5'-triphosphate = cyclic pyranopterin phosphate + diphosphate. It functions in the pathway cofactor biosynthesis; molybdopterin biosynthesis. Catalyzes the conversion of (8S)-3',8-cyclo-7,8-dihydroguanosine 5'-triphosphate to cyclic pyranopterin monophosphate (cPMP). The chain is Cyclic pyranopterin monophosphate synthase from Cronobacter sakazakii (strain ATCC BAA-894) (Enterobacter sakazakii).